The sequence spans 955 residues: Histone deacetylase 6 (955 aa).

2 histone deacetylase regions span residues 15 to 337 and 425 to 749; these read TLIG…YAPF and METL…VLQN. The active-site 1 is the H146. The 2 role is filled by H561. Positions 815–840 are disordered; it reads SIDMADQSSSSGSSSSSTRPSHNLEI. The span at 818–831 shows a compositional bias: low complexity; that stretch reads MADQSSSSGSSSSS. The segment at 853–951 adopts a UBP-type zinc-finger fold; it reads ATCPHLKEVK…SAAHESKFGE (99 aa). C855, H857, C875, C878, C887, C890, and C895 together coordinate Zn(2+). Residues 896–898 are ubiquitin binding; the sequence is GRF. Positions 902, 906, 912, 925, and 928 each coordinate Zn(2+). The tract at residues 924-931 is ubiquitin binding; sequence WCYPCDSY.

It belongs to the histone deacetylase family. HD type 2 subfamily. Requires Zn(2+) as cofactor.

The protein resides in the nucleus. It catalyses the reaction N(6)-acetyl-L-lysyl-[histone] + H2O = L-lysyl-[histone] + acetate. Functionally, probable histone deacetylase. Histone deacetylases are responsible for the deacetylation of lysine residues on the N-terminal part of the core histones (H2A, H2B, H3 and H4). Histone deacetylation gives a tag for epigenetic repression and plays an important role in transcriptional regulation, cell cycle progression and developmental events. Histone deacetylases act via the formation of large multiprotein complexes. This chain is Histone deacetylase 6 (hda-6), found in Caenorhabditis elegans.